Reading from the N-terminus, the 410-residue chain is Zinc finger TRAF-type-containing protein 1 (410 aa).

Residues 1–13 (MSGAEEAGGGGPA) show a composition bias toward gly residues. Positions 1–22 (MSGAEEAGGGGPAAGPAGSVPA) are disordered. The segment at 117-162 (CTVCLDLPKASVYQCTNGHLMCAGCFIHLLADARLKEEQATCPNCR) adopts an RING-type; degenerate zinc-finger fold. The TRAF-type zinc-finger motif lies at 158-231 (CPNCRCEISK…PWHGPFHELT (74 aa)).

The protein belongs to the ZFTRAF1 family. In terms of assembly, interacts with LGALS3.

It localises to the cytoplasm. The protein localises to the perinuclear region. The sequence is that of Zinc finger TRAF-type-containing protein 1 from Bos taurus (Bovine).